We begin with the raw amino-acid sequence, 99 residues long: Beta-2-microglobulin (99 aa).

Residues 5 to 92 (PNVQVYSRHP…KHVTLKEPMT (88 aa)) enclose the Ig-like C1-type domain. The cysteines at positions 25 and 80 are disulfide-linked.

This sequence belongs to the beta-2-microglobulin family. As to quaternary structure, heterodimer of an alpha chain and a beta chain. Beta-2-microglobulin is the beta-chain of major histocompatibility complex class I molecules.

It localises to the secreted. Component of the class I major histocompatibility complex (MHC). Involved in the presentation of peptide antigens to the immune system. This Oryctolagus cuniculus (Rabbit) protein is Beta-2-microglobulin (B2M).